A 100-amino-acid polypeptide reads, in one-letter code: Small ribosomal subunit protein uS14c (100 aa).

Belongs to the universal ribosomal protein uS14 family. Part of the 30S ribosomal subunit.

It is found in the plastid. The protein resides in the chloroplast. Its function is as follows. Binds 16S rRNA, required for the assembly of 30S particles. The polypeptide is Small ribosomal subunit protein uS14c (Helianthus annuus (Common sunflower)).